Here is a 346-residue protein sequence, read N- to C-terminus: 4-hydroxy-2-oxovalerate aldolase 2 (346 aa).

The Pyruvate carboxyltransferase domain maps to 8 to 258 (VTLVDTTLRD…HTGVELFPLI (251 aa)). Substrate contacts are provided by residues 16–17 (RD), serine 170, and histidine 197. Aspartate 17 provides a ligand contact to Mn(2+). Mn(2+) is bound by residues histidine 197 and histidine 199. Residue tyrosine 288 coordinates substrate.

Belongs to the 4-hydroxy-2-oxovalerate aldolase family.

The catalysed reaction is (S)-4-hydroxy-2-oxopentanoate = acetaldehyde + pyruvate. This chain is 4-hydroxy-2-oxovalerate aldolase 2, found in Nocardia farcinica (strain IFM 10152).